The following is a 443-amino-acid chain: MPGFHLNEMGEMVLDAIDDIGVVDVYDLASDIGKEYERIMDRFGTDAVSGLMPKIINTLELLEALATKNERENATIQELRDKVAQLESEKLEKAEFRRRFDKELELIEEQWRSETNELVDLVSSLQDENKRLVKQTQDLQSSSAQSSGLGASLTESIISMTNHELHSALSDTQVLQRLKEQIYKQRDELKHRERELQDKYSELEHLNIQAERLKASERDTRRRHKLMQAQVKTLCEERADFLAQLQDQSREINQLRKRLGLAEKENEDLVASYDDGQNDPNRPRYTTRELKELISERDELLTTIDTLNEQLAELKPPSQAKGKRQRHFSSSDDSDEDDDGHVADNDDDDDEEEAAAEANELEPPAAGETPPGHDAPVQGPLPYEPDDAPWKKSSESGIRKFFRKLFSDPSDGSNTFPKRSLATLSKMALSATPGSVSASAAAK.

Positions 8 to 96 (EMGEMVLDAI…ESEKLEKAEF (89 aa)) constitute an RH1 domain. Residues 59–315 (LELLEALATK…TLNEQLAELK (257 aa)) are a coiled coil. The RH2 domain occupies 282–401 (RPRYTTRELK…KSSESGIRKF (120 aa)). The interval 311–394 (LAELKPPSQA…PDDAPWKKSS (84 aa)) is disordered. A compositionally biased stretch (acidic residues) spans 332 to 355 (DDSDEDDDGHVADNDDDDDEEEAA). Residues 356 to 368 (AEANELEPPAAGE) show a composition bias toward low complexity.

Belongs to the RILPL family. In terms of assembly, interacts with Arl8 (in GTP-bound form).

It localises to the lysosome membrane. Functionally, may have a role in lysosome distribution by interacting with Arl8. The sequence is that of RILP-like protein homolog from Drosophila melanogaster (Fruit fly).